The sequence spans 585 residues: Protein FAM151A (585 aa).

A helical transmembrane segment spans residues 14–34; sequence WVFASITCVSAVAIAAIVLAI.

The protein belongs to the menorin family.

It localises to the membrane. The protein is Protein FAM151A (FAM151A) of Pongo abelii (Sumatran orangutan).